We begin with the raw amino-acid sequence, 810 residues long: Abnormal pharyngeal pumping eat-20 (810 aa).

An N-terminal signal peptide occupies residues 1-20 (MTTFCRVLLIFGIYVAVCCA). Residues 21-748 (QSVEDDVFHF…GKQSSAAASW (728 aa)) are Extracellular-facing. N-linked (GlcNAc...) asparagine glycans are attached at residues Asn90, Asn171, and Asn232. 3 EGF-like domains span residues 220-257 (PPSP…DRCE), 258-293 (LDVC…LLCE), and 301-335 (VAPI…ANCN). Disulfide bonds link Cys224/Cys235, Cys229/Cys245, Cys247/Cys256, Cys261/Cys272, Cys266/Cys281, Cys283/Cys292, Cys305/Cys314, Cys309/Cys323, and Cys325/Cys334. A glycan (N-linked (GlcNAc...) asparagine) is linked at Asn371. The segment covering 522 to 531 (FAPTTGTQQP) has biased composition (low complexity). Disordered stretches follow at residues 522-567 (FAPT…STMQ) and 684-738 (PHPQ…HTSS). Residues 542-558 (DENEEEEEEETTEETEE) are compositionally biased toward acidic residues. Residues 749 to 769 (IIAIIALIVLGLLLLATSLFI) form a helical membrane-spanning segment. At 770 to 810 (LRYIRQSRKLHGKYNPAREEHNLSAAYAMPMSHIAKEERLI) the chain is on the cytoplasmic side.

As to expression, highly expressed in the pharynx, circumpharyngeal cells, pharyngeal-intestinal valve and a subset of neurons in larval and embryonic stages. Also moderately expressed in the lining of the intestine, coelomocytes, labial process bundles and some hypodermal cells. In adults, it is predominantly expressed in the pharynx, the pharyngeal-intenstinal valve, some circumpharyngeal cells, m3, m4 and m6 pharyngeal muscles, and IL1, OLQ, BAG and ALN neurons. Weaker expression is observed in labial process bundles, coelomocytes, the ventral hypodermal ridge, the vulval hypodermis and the sensory rays of the adult male tail.

Its subcellular location is the membrane. Functionally, regulates pharyngeal pumping during feeding. The chain is Abnormal pharyngeal pumping eat-20 (eat-20) from Caenorhabditis elegans.